The following is a 353-amino-acid chain: UPF0283 membrane protein YcjF (353 aa).

A compositionally biased stretch (basic and acidic residues) spans 1-19; the sequence is MSEPLKPRIDFAEPLKEEP. The disordered stretch occupies residues 1–48; that stretch reads MSEPLKPRIDFAEPLKEEPTSAFKAQQTFSEAESHTFAPAAIDERPED. Over 1–69 the chain is Periplasmic; sequence MSEPLKPRID…LRPKRSLWRK (69 aa). A helical transmembrane segment spans residues 70 to 90; that stretch reads MVMGGLALFGASVVGQGVQWT. The Cytoplasmic segment spans residues 91 to 99; it reads MNAWQTQDW. Residues 100-120 traverse the membrane as a helical segment; it reads VALGGCAAGALIVGAGVGSVV. The Periplasmic portion of the chain corresponds to 121–212; that stretch reads TEWWRLWRLR…ARREISRFAA (92 aa). A helical transmembrane segment spans residues 213 to 233; it reads ESTLMIAVSPLALVDMAFIAW. Over 234–353 the chain is Cytoplasmic; it reads RNLRLINRIA…LQKSKSSPEK (120 aa).

It belongs to the UPF0283 family.

The protein localises to the cell inner membrane. The polypeptide is UPF0283 membrane protein YcjF (ycjF) (Salmonella typhi).